The chain runs to 860 residues: Protein argonaute-3 (860 aa).

A PAZ domain is found at 230-349 (PVIQFMCEVL…LPLEVCNIVA (120 aa)). The Piwi domain occupies 518 to 819 (LIIVILPGKT…VAFRARYHLV (302 aa)). The interval 530 to 567 (YAEVKRAGDTLLGMATQCVQVKNVIKTSPQTLSNLCLK) is interaction with guide RNA. A divalent metal cation is bound by residues D598, E638, and D670. Residues 758-805 (QGTSRPSHYHVLWDDNCFTADELQLLTYQLCHTYVRCTRSVSIPAPAY) form an interaction with guide RNA region. A divalent metal cation is bound at residue H808.

It belongs to the argonaute family. Ago subfamily.

The protein resides in the cytoplasm. Its subcellular location is the P-body. It catalyses the reaction Endonucleolytic cleavage to 5'-phosphomonoester.. In terms of biological role, required for RNA-mediated gene silencing (RNAi). Binds to short RNAs such as microRNAs (miRNAs) and represses the translation of mRNAs which are complementary to them. Possesses RNA slicer activity but only on select RNAs bearing 5'- and 3'-flanking sequences to the region of guide-target complementarity. This Gallus gallus (Chicken) protein is Protein argonaute-3 (AGO3).